The primary structure comprises 287 residues: Fructose-bisphosphate aldolase (287 aa).

Position 50 (Ser50) interacts with D-glyceraldehyde 3-phosphate. Asp85 functions as the Proton donor in the catalytic mechanism. Residues His86, Asp107, Glu137, and His181 each coordinate Zn(2+). Residue Gly182 coordinates dihydroxyacetone phosphate. His209 lines the Zn(2+) pocket. Residues 210–212 and 231–234 each bind dihydroxyacetone phosphate; these read GGT and NVNT. 2 positions are modified to phosphothreonine: Thr212 and Thr234.

It belongs to the class II fructose-bisphosphate aldolase family. Zn(2+) serves as cofactor.

It carries out the reaction beta-D-fructose 1,6-bisphosphate = D-glyceraldehyde 3-phosphate + dihydroxyacetone phosphate. It functions in the pathway carbohydrate degradation; glycolysis; D-glyceraldehyde 3-phosphate and glycerone phosphate from D-glucose: step 4/4. Catalyzes the aldol condensation of dihydroxyacetone phosphate (DHAP or glycerone-phosphate) with glyceraldehyde 3-phosphate (G3P) to form fructose 1,6-bisphosphate (FBP) in gluconeogenesis and the reverse reaction in glycolysis. This is Fructose-bisphosphate aldolase (fba) from Geobacillus stearothermophilus (Bacillus stearothermophilus).